Here is a 137-residue protein sequence, read N- to C-terminus: Large-conductance mechanosensitive channel (137 aa).

A run of 2 helical transmembrane segments spans residues 9-29 and 79-99; these read AFAVKGNVVDMAVGIIIGAAF and IQTILDFVIVAFAIFMGVKAI.

It belongs to the MscL family. In terms of assembly, homopentamer.

The protein resides in the cell inner membrane. Channel that opens in response to stretch forces in the membrane lipid bilayer. May participate in the regulation of osmotic pressure changes within the cell. The polypeptide is Large-conductance mechanosensitive channel (Pseudomonas paraeruginosa (strain DSM 24068 / PA7) (Pseudomonas aeruginosa (strain PA7))).